We begin with the raw amino-acid sequence, 204 residues long: Ribosome maturation factor RimP (204 aa).

A disordered region spans residues Gly176 to His204. Positions Ser181–Glu198 are enriched in acidic residues.

The protein belongs to the RimP family.

The protein resides in the cytoplasm. Its function is as follows. Required for maturation of 30S ribosomal subunits. This chain is Ribosome maturation factor RimP, found in Cereibacter sphaeroides (strain ATCC 17029 / ATH 2.4.9) (Rhodobacter sphaeroides).